A 168-amino-acid polypeptide reads, in one-letter code: Small ribosomal subunit protein uS5 (168 aa).

The 64-residue stretch at Ile-17–Val-80 folds into the S5 DRBM domain.

Belongs to the universal ribosomal protein uS5 family. Part of the 30S ribosomal subunit. Contacts proteins S4 and S8.

With S4 and S12 plays an important role in translational accuracy. Functionally, located at the back of the 30S subunit body where it stabilizes the conformation of the head with respect to the body. The polypeptide is Small ribosomal subunit protein uS5 (Lactobacillus acidophilus (strain ATCC 700396 / NCK56 / N2 / NCFM)).